A 524-amino-acid polypeptide reads, in one-letter code: Alkaline phosphatase, tissue-nonspecific isozyme (524 aa).

Positions 1–17 (MILPFLVLAIGTCLTNS) are cleaved as a signal peptide. Position 60 (Asp60) interacts with Mg(2+). Residues Asp60 and Ser110 each coordinate Zn(2+). Ser110 (phosphoserine intermediate) is an active-site residue. Residue Ser110 is modified to Phosphoserine. A disulfide bridge links Cys139 with Cys201. The N-linked (GlcNAc...) asparagine glycan is linked to Asn140. Mg(2+) is bound at residue Thr173. The N-linked (GlcNAc...) asparagine glycan is linked to Asn230. Glu235 is a binding site for Ca(2+). N-linked (GlcNAc...) asparagine glycosylation occurs at Asn271. 2 residues coordinate Ca(2+): Phe290 and Glu291. N-linked (GlcNAc...) asparagine glycosylation is present at Asn303. Asp306 provides a ligand contact to Ca(2+). Glu332 contributes to the Mg(2+) binding site. Zn(2+) is bound by residues Asp337, His341, Asp378, and His379. Asn430 is a glycosylation site (N-linked (GlcNAc...) asparagine). His454 is a binding site for Zn(2+). A disulfide bridge links Cys489 with Cys497. Residue Ser501 is the site of GPI-anchor amidated serine attachment. Residues 502–524 (SASSPSPGALLLPLALFPLRTLF) constitute a propeptide, removed in mature form.

It belongs to the alkaline phosphatase family. In terms of assembly, homodimer. Mg(2+) is required as a cofactor. The cofactor is Zn(2+). Ca(2+) serves as cofactor. In terms of processing, N-glycosylated.

The protein localises to the cell membrane. Its subcellular location is the extracellular vesicle membrane. The protein resides in the mitochondrion membrane. It is found in the mitochondrion intermembrane space. It catalyses the reaction a phosphate monoester + H2O = an alcohol + phosphate. The catalysed reaction is diphosphate + H2O = 2 phosphate + H(+). It carries out the reaction pyridoxal 5'-phosphate + H2O = pyridoxal + phosphate. The enzyme catalyses phosphoethanolamine + H2O = ethanolamine + phosphate. It catalyses the reaction N-phosphocreatine + H2O = creatine + phosphate. The catalysed reaction is ATP + H2O = ADP + phosphate + H(+). It carries out the reaction ADP + H2O = AMP + phosphate + H(+). The enzyme catalyses AMP + H2O = adenosine + phosphate. Its activity is regulated as follows. Phosphatase activity is specifically inhibited by 5-((5-chloro-2-methoxyphenyl)sulfonamido)nicotinamide (SBI-425). Alkaline phosphatase that metabolizes various phosphate compounds and plays a key role in skeletal mineralization and adaptive thermogenesis. Has broad substrate specificity and can hydrolyze a considerable variety of compounds: however, only a few substrates, such as diphosphate (inorganic pyrophosphate; PPi), pyridoxal 5'-phosphate (PLP) and N-phosphocreatine are natural substrates. Plays an essential role in skeletal and dental mineralization via its ability to hydrolyze extracellular diphosphate, a potent mineralization inhibitor, to phosphate: it thereby promotes hydroxyapatite crystal formation and increases inorganic phosphate concentration. Acts in a non-redundant manner with PHOSPHO1 in skeletal mineralization: while PHOSPHO1 mediates the initiation of hydroxyapatite crystallization in the matrix vesicles (MVs), ALPL/TNAP catalyzes the spread of hydroxyapatite crystallization in the extracellular matrix. Also promotes dephosphorylation of osteopontin (SSP1), an inhibitor of hydroxyapatite crystallization in its phosphorylated state; it is however unclear whether ALPL/TNAP mediates SSP1 dephosphorylation via a direct or indirect manner. Catalyzes dephosphorylation of PLP to pyridoxal (PL), the transportable form of vitamin B6, in order to provide a sufficient amount of PLP in the brain, an essential cofactor for enzymes catalyzing the synthesis of diverse neurotransmitters. Additionally, also able to mediate ATP degradation in a stepwise manner to adenosine, thereby regulating the availability of ligands for purinergic receptors. Also capable of dephosphorylating microbial products, such as lipopolysaccharides (LPS) as well as other phosphorylated small-molecules, such as poly-inosine:cytosine (poly I:C). Acts as a key regulator of adaptive thermogenesis as part of the futile creatine cycle: localizes to the mitochondria of thermogenic fat cells and acts by mediating hydrolysis of N-phosphocreatine to initiate a futile cycle of creatine dephosphorylation and phosphorylation. During the futile creatine cycle, creatine and N-phosphocreatine are in a futile cycle, which dissipates the high energy charge of N-phosphocreatine as heat without performing any mechanical or chemical work. The chain is Alkaline phosphatase, tissue-nonspecific isozyme (Alpl) from Rattus norvegicus (Rat).